We begin with the raw amino-acid sequence, 130 residues long: Bet1-like SNARE 1-2 (130 aa).

At 1-106 (MNFRRENRAS…EKKSNRKSCK (106 aa)) the chain is on the cytoplasmic side. Residues 33–95 (AHDERDNDEA…SGTINRFKLV (63 aa)) enclose the t-SNARE coiled-coil homology domain. A coiled-coil region spans residues 40-82 (DEALENLQDRVSFLKRVTGDIHEEVENHNRLLDKVGNKMDSAR). A helical; Anchor for type IV membrane protein transmembrane segment spans residues 107-122 (LIAYFVLLFLIMYYLI). Topologically, residues 123 to 130 (RLLNYIKG) are vesicular.

This sequence belongs to the BET1 family.

The protein resides in the golgi apparatus membrane. It localises to the endoplasmic reticulum membrane. Required for vesicular transport from the ER to the Golgi complex. Functions as a SNARE associated with ER-derived vesicles. The protein is Bet1-like SNARE 1-2 (BET12) of Arabidopsis thaliana (Mouse-ear cress).